The sequence spans 310 residues: Transcription initiation factor TFIID subunit 8 (310 aa).

The disordered stretch occupies residues 1–30 (MADAAATAGAGGSGTRSGSKQSTNPADNYH). A2 is modified (N-acetylalanine). The Histone-fold; involved in forming hexamer structure in TFIID complex domain occupies 35 to 102 (RTLQVVVSSL…IVVTLVEMGF (68 aa)). Position 130 is a phosphothreonine (T130). The segment at 262–310 (DSGAEKENTSVLQQNPSLSGSRNGEENIIDNPYLRPVKKPKIRRKKSLS) is disordered. A compositionally biased stretch (polar residues) spans 270-283 (TSVLQQNPSLSGSR). A Phosphoserine modification is found at S271. The Nuclear localization signal signature appears at 294 to 307 (YLRPVKKPKIRRKK). A compositionally biased stretch (basic residues) spans 297–310 (PVKKPKIRRKKSLS).

It belongs to the TAF8 family. Component of the TFIID basal transcription factor complex, composed of TATA-box-binding protein TBP, and a number of TBP-associated factors (TAFs), including TAF1, TAF2, TAF3, TAF4, TAF5, TAF6, TAF7, TAF8, TAF9, TAF10, TAF11, TAF12 and TAF13. Interacts with TBP, TAF1, TAF6, TAF10, TAF11 and TAF13. Component also of a small TAF complex (SMAT) containing TAF8, TAF10 and SUPT7L. Forms a heterodimer with TAF10. Interaction with TAF10 is mediated mainly via its histone fold domain while interaction with SUPT7L is via its C-terminal region.

It is found in the nucleus. It localises to the cytoplasm. Its function is as follows. The TFIID basal transcription factor complex plays a major role in the initiation of RNA polymerase II (Pol II)-dependent transcription. TFIID recognizes and binds promoters with or without a TATA box via its subunit TBP, a TATA-box-binding protein, and promotes assembly of the pre-initiation complex (PIC). The TFIID complex consists of TBP and TBP-associated factors (TAFs), including TAF1, TAF2, TAF3, TAF4, TAF5, TAF6, TAF7, TAF8, TAF9, TAF10, TAF11, TAF12 and TAF13. The TFIID complex structure can be divided into 3 modules TFIID-A, TFIID-B, and TFIID-C. TAF8 is involved in forming the TFIID-B module, together with TAF5. Mediates both basal and activator-dependent transcription. Plays a role in the differentiation of preadipocyte fibroblasts to adipocytes, however, does not seem to play a role in differentiation of myoblasts. Required for the integration of TAF10 in the TAF complex. May be important for survival of cells of the inner cell mass which constitute the pluripotent cell population of the early embryo. This is Transcription initiation factor TFIID subunit 8 (TAF8) from Homo sapiens (Human).